The sequence spans 37 residues: Cytochrome b6-f complex subunit 5 (37 aa).

The helical transmembrane segment at 5–25 threads the bilayer; it reads LLSGIILGLIPITICGLFFTA.

It belongs to the PetG family. The 4 large subunits of the cytochrome b6-f complex are cytochrome b6, subunit IV (17 kDa polypeptide, PetD), cytochrome f and the Rieske protein, while the 4 small subunits are PetG, PetL, PetM and PetN. The complex functions as a dimer.

The protein localises to the plastid. Its subcellular location is the chloroplast thylakoid membrane. Its function is as follows. Component of the cytochrome b6-f complex, which mediates electron transfer between photosystem II (PSII) and photosystem I (PSI), cyclic electron flow around PSI, and state transitions. PetG is required for either the stability or assembly of the cytochrome b6-f complex. The chain is Cytochrome b6-f complex subunit 5 from Euglena gracilis.